The primary structure comprises 1011 residues: Poly [ADP-ribose] polymerase 1 (1011 aa).

2 PARP-type zinc fingers span residues 9–91 and 113–203; these read YRAE…ETGA and FAAE…PATK. 8 residues coordinate Zn(2+): Cys21, Cys24, His53, Cys56, Cys125, Cys128, His159, and Cys162. The interval 198–235 is disordered; it reads QLPATKTEGKRKGEEVDGNVVAKKKSRKEKEKESKQEK. 2 short sequence motifs (nuclear localization signal) span residues 207 to 209 and 220 to 225; these read KRK and KKKSRK. Residues 224–358 form the PADR1 zinc-binding domain; the sequence is RKEKEKESKQ…CKKQDRIFPP (135 aa). The span at 225 to 235 shows a compositional bias: basic and acidic residues; that stretch reads KEKEKESKQEK. The interval 289–331 is zinc ribbon; it reads GALLPCEECKGQFVFKSDAYYCSGDITAWTKCVAKTQTPNRKD. Cys294, Cys297, Cys310, and Cys320 together coordinate Zn(2+). A disordered region spans residues 359–378; that stretch reads EAATVNSAPPPPASAPLTET. The interval 371-522 is automodification domain; the sequence is ASAPLTETVT…PSKSEKKMKL (152 aa). Positions 382–473 constitute a BRCT domain; it reads PQDKPLTNMK…KGFQELLSLH (92 aa). PolyADP-ribosyl glutamic acid is present on residues Glu403, Glu404, Glu410, Glu411, Glu432, Glu434, Glu441, Glu442, Glu453, Glu454, Glu468, Glu481, Glu485, Glu488, Glu509, Glu510, and Glu517. Residues 496-519 form a disordered region; sequence SKPANMKSAGKVKEEQGPSKSEKK. Residues 506–519 show a composition bias toward basic and acidic residues; sequence KVKEEQGPSKSEKK. The WGR domain occupies 539-635; that stretch reads SAHVFEKGGK…KNFTKYPKKF (97 aa). Residues 659–776 enclose the PARP alpha-helical domain; it reads KSKLAKPIQD…DIEVAYSLLR (118 aa). The 227-residue stretch at 785–1011 folds into the PARP catalytic domain; that stretch reads DPIDINYEKL…LKFNYKTSLW (227 aa). NAD(+) is bound by residues 859–861, Gly868, Arg875, and Ser901; that span reads HGS. Glu985 serves as the catalytic For poly [ADP-ribose] polymerase activity.

Belongs to the ARTD/PARP family. In terms of assembly, homodimer; PARP-type zinc-fingers from separate parp1 molecules form a dimer module that specifically recognizes DNA strand breaks. Post-translationally, poly-ADP-ribosylated on serine, glutamate and aspartate residues by autocatalysis. Auto-ADP-ribosylation on serine takes place following interaction with HPF1. Auto poly-ADP-ribosylation on serine residues promotes its dissociation from chromatin.

The protein localises to the chromosome. Its subcellular location is the nucleus. The protein resides in the nucleolus. It is found in the cytoplasm. It localises to the cytosol. The catalysed reaction is NAD(+) + (ADP-D-ribosyl)n-acceptor = nicotinamide + (ADP-D-ribosyl)n+1-acceptor + H(+).. It carries out the reaction L-seryl-[protein] + NAD(+) = O-(ADP-D-ribosyl)-L-seryl-[protein] + nicotinamide + H(+). The enzyme catalyses L-aspartyl-[protein] + NAD(+) = 4-O-(ADP-D-ribosyl)-L-aspartyl-[protein] + nicotinamide. It catalyses the reaction L-glutamyl-[protein] + NAD(+) = 5-O-(ADP-D-ribosyl)-L-glutamyl-[protein] + nicotinamide. The catalysed reaction is L-tyrosyl-[protein] + NAD(+) = O-(ADP-D-ribosyl)-L-tyrosyl-[protein] + nicotinamide + H(+). It carries out the reaction L-histidyl-[protein] + NAD(+) = N(tele)-(ADP-D-ribosyl)-L-histidyl-[protein] + nicotinamide + H(+). Its activity is regulated as follows. ADP-ribosyltransferase activity is regulated via an allosteric activation mechanism. In absence of activation signal, parp1 is autoinhibited by the PARP alpha-helical domain (also named HD region), which prevents effective NAD(+)-binding. Activity is highly stimulated by signals, such as DNA strand breaks. Binding to damaged DNA unfolds the PARP alpha-helical domain, relieving autoinhibition. Poly-ADP-ribosyltransferase activity is tightly regulated and parp1 is removed from damaged chromatin following initial poly-ADP-ribosylation of chromatin to avoid prolonged residence (trapping) that has cytotoxic consequences. A number of factors or post-translational modifications (auto-poly-ADP-ribosylation) promote parp1 removal from chromatin. Poly-ADP-ribosyltransferase that mediates poly-ADP-ribosylation of proteins and plays a key role in DNA repair. Mediates glutamate, aspartate, serine, histidine or tyrosine ADP-ribosylation of proteins: the ADP-D-ribosyl group of NAD(+) is transferred to the acceptor carboxyl group of target residues and further ADP-ribosyl groups are transferred to the 2'-position of the terminal adenosine moiety, building up a polymer with an average chain length of 20-30 units. Serine ADP-ribosylation of proteins constitutes the primary form of ADP-ribosylation of proteins in response to DNA damage. Specificity for the different amino acids is conferred by interacting factors, such as hpf1 and nmnat1. Following interaction with hpf1, catalyzes serine ADP-ribosylation of target proteins; hpf1 confers serine specificity by completing the parp1 active site. Also catalyzes tyrosine ADP-ribosylation of target proteins following interaction with hpf1. Following interaction with nmnat1, catalyzes glutamate and aspartate ADP-ribosylation of target proteins; nmnat1 confers glutamate and aspartate specificity. Parp1 initiates the repair of DNA breaks: recognizes and binds DNA breaks within chromatin and recruits hpf1, licensing serine ADP-ribosylation of target proteins, such as histones (H2BS6ADPr and H3S10ADPr), thereby promoting decompaction of chromatin and the recruitment of repair factors leading to the reparation of DNA strand breaks. In addition to base excision repair (BER) pathway, also involved in double-strand breaks (DSBs) repair. Mediates the poly-ADP-ribosylation of a number of proteins. In addition to proteins, also able to ADP-ribosylate DNA: catalyzes ADP-ribosylation of DNA strand break termini containing terminal phosphates and a 2'-OH group in single- and double-stranded DNA, respectively. Parp1-mediated DNA repair in neurons plays a role in sleep: senses DNA damage in neurons and promotes sleep, facilitating efficient DNA repair. In addition to DNA repair, also involved in other processes, such as transcription regulation, programmed cell death, membrane repair, adipogenesis and innate immunity. Acts as a repressor of transcription: binds to nucleosomes and modulates chromatin structure in a manner similar to histone H1, thereby altering RNA polymerase II. Acts both as a positive and negative regulator of transcription elongation, depending on the context. Poly-ADP-ribose chains generated by parp1 also play a role in poly-ADP-ribose-dependent cell death, a process named parthanatos. Also acts as a negative regulator of the cGAS-STING pathway by mediating poly-ADP-ribosylation and inactivation of cgas. Acts as a negative regulator of adipogenesis by catalyzing poly ADP-ribosylation of histone H2B on 'Glu-35' (H2BE35ADPr). This is Poly [ADP-ribose] polymerase 1 (PARP1) from Gallus gallus (Chicken).